Here is an 83-residue protein sequence, read N- to C-terminus: Large ribosomal subunit protein bL27 (83 aa).

The protein belongs to the bacterial ribosomal protein bL27 family.

The sequence is that of Large ribosomal subunit protein bL27 (rpmA) from Thermotoga maritima (strain ATCC 43589 / DSM 3109 / JCM 10099 / NBRC 100826 / MSB8).